Here is a 338-residue protein sequence, read N- to C-terminus: Stage V sporulation protein AD (338 aa).

The chain is Stage V sporulation protein AD (spoVAD) from Bacillus subtilis (strain 168).